We begin with the raw amino-acid sequence, 259 residues long: MNWLEAFILGIIQGLTEFLPISSTGHLYLGRHLFQLDEAGLFLDTMLHIGTLLAVFIYYKKEFIYLIKNPFSKLMLLLIVGTIPAVVIGLLFKDFFEDISKTGITIGWEFLVTGFFLYMADKXKNGRKKMDDITYKDAFIIGSFXAVAIFPAISRSGMTIVAALWRKLDRETAAYFSFLLSTPAIVGAIILQFVDVFQGKAESISSTSLIVGTLSAAFFGYIAVSWMIQYLKRHSLKVFAYYVWGLGILILTLQFTRVF.

A run of 8 helical transmembrane segments spans residues methionine 1–isoleucine 21, alanine 39–tyrosine 59, phenylalanine 71–leucine 91, isoleucine 99–methionine 119, isoleucine 133–isoleucine 153, alanine 174–valine 194, serine 208–isoleucine 228, and leucine 236–threonine 256.

This sequence belongs to the UppP family.

The protein localises to the cell membrane. The enzyme catalyses di-trans,octa-cis-undecaprenyl diphosphate + H2O = di-trans,octa-cis-undecaprenyl phosphate + phosphate + H(+). In terms of biological role, catalyzes the dephosphorylation of undecaprenyl diphosphate (UPP). Confers resistance to bacitracin. The protein is Undecaprenyl-diphosphatase 3 of Bacillus cereus (strain ATCC 10987 / NRS 248).